Here is a 135-residue protein sequence, read N- to C-terminus: Small ribosomal subunit protein uS9 (135 aa).

A compositionally biased stretch (basic and acidic residues) spans 102–115; it reads PLKTEGHLSRDPRA. The disordered stretch occupies residues 102–135; it reads PLKTEGHLSRDPRAKERRKYGLKKARKAPQFSKR. Over residues 116–135 the composition is skewed to basic residues; it reads KERRKYGLKKARKAPQFSKR.

It belongs to the universal ribosomal protein uS9 family.

The chain is Small ribosomal subunit protein uS9 from Synechococcus sp. (strain CC9311).